We begin with the raw amino-acid sequence, 194 residues long: 3-isopropylmalate dehydratase small subunit (194 aa).

This sequence belongs to the LeuD family. LeuD type 1 subfamily. Heterodimer of LeuC and LeuD.

The enzyme catalyses (2R,3S)-3-isopropylmalate = (2S)-2-isopropylmalate. It functions in the pathway amino-acid biosynthesis; L-leucine biosynthesis; L-leucine from 3-methyl-2-oxobutanoate: step 2/4. Functionally, catalyzes the isomerization between 2-isopropylmalate and 3-isopropylmalate, via the formation of 2-isopropylmaleate. The protein is 3-isopropylmalate dehydratase small subunit of Limosilactobacillus fermentum (strain NBRC 3956 / LMG 18251) (Lactobacillus fermentum).